Here is a 516-residue protein sequence, read N- to C-terminus: Cilia- and flagella-associated protein 53 (516 aa).

2 coiled-coil regions span residues 217 to 283 (EEKK…LQVK) and 316 to 440 (MQGY…RQMK). Basic and acidic residues-rich tracts occupy residues 417-436 (KELLESATEEHKQLETDRNA) and 461-472 (QAEREEEQREFE). Disordered regions lie at residues 417-443 (KELLESATEEHKQLETDRNARQMKVAQ) and 455-475 (YQQSQRQAEREEEQREFEAGL).

This sequence belongs to the CFAP53 family.

Its subcellular location is the cytoplasm. The protein resides in the cytoskeleton. The protein localises to the cilium axoneme. It is found in the microtubule organizing center. It localises to the centrosome. Its subcellular location is the centriolar satellite. Functionally, microtubule inner protein (MIP) part of the dynein-decorated doublet microtubules (DMTs) in cilia axoneme, which is required for motile cilia beating. Regulates motility patterns of both 9+0 and 9+2 motile cilia through differential localization and recruitment of axonemal dynein components. Required for motile cilium formation and movement. Involved in the establishment of left-right symmetry during embryogenesis. The sequence is that of Cilia- and flagella-associated protein 53 from Xenopus laevis (African clawed frog).